Consider the following 157-residue polypeptide: MHAPMPLLLTGRGFRRDLEANGCLAVHAPLEGGAETRLLRRLRGAGYRTRMTSARGLGDPEVFLTQKHGIRPPHLGHNCVGRGAAVGEVQQVVPLIGDLLDGDDSVALWILEGQVLSRSELLSLCDLCKREPRLRIIVEMGGARSLRWQPMKALLGA.

It belongs to the complex I NdhN subunit family. In terms of assembly, NDH-1 can be composed of about 15 different subunits; different subcomplexes with different compositions have been identified which probably have different functions.

The protein resides in the cellular thylakoid membrane. It carries out the reaction a plastoquinone + NADH + (n+1) H(+)(in) = a plastoquinol + NAD(+) + n H(+)(out). The enzyme catalyses a plastoquinone + NADPH + (n+1) H(+)(in) = a plastoquinol + NADP(+) + n H(+)(out). Functionally, NDH-1 shuttles electrons from an unknown electron donor, via FMN and iron-sulfur (Fe-S) centers, to quinones in the respiratory and/or the photosynthetic chain. The immediate electron acceptor for the enzyme in this species is believed to be plastoquinone. Couples the redox reaction to proton translocation, and thus conserves the redox energy in a proton gradient. Cyanobacterial NDH-1 also plays a role in inorganic carbon-concentration. This chain is NAD(P)H-quinone oxidoreductase subunit N, found in Synechococcus sp. (strain CC9902).